Reading from the N-terminus, the 188-residue chain is Ribosome-recycling factor (188 aa).

This sequence belongs to the RRF family.

It localises to the cytoplasm. Functionally, responsible for the release of ribosomes from messenger RNA at the termination of protein biosynthesis. May increase the efficiency of translation by recycling ribosomes from one round of translation to another. The polypeptide is Ribosome-recycling factor (Phenylobacterium zucineum (strain HLK1)).